We begin with the raw amino-acid sequence, 155 residues long: Cathelicidin-1 (155 aa).

Positions 1–29 (METPRASLSLGRWSLWLLLLGLALPSASA) are cleaved as a signal peptide. Gln30 is subject to Pyrrolidone carboxylic acid. Positions 30-143 (QALSYREAVL…KQPWAPPQAA (114 aa)) are excised as a propeptide. Disulfide bonds link Cys85-Cys96, Cys107-Cys124, and Cys146-Cys154.

Belongs to the cathelicidin family. As to expression, large granules of neutrophils.

The protein localises to the secreted. Potent microbicidal activity; active against S.aureus and E.coli. This chain is Cathelicidin-1 (CATHL1), found in Bos taurus (Bovine).